The primary structure comprises 233 residues: Peptidyl-tRNA hydrolase (233 aa).

Residue tyrosine 14 coordinates tRNA. Histidine 19 serves as the catalytic Proton acceptor. TRNA-binding residues include phenylalanine 64, asparagine 66, and asparagine 112. The segment at valine 187–lysine 233 is disordered.

It belongs to the PTH family. As to quaternary structure, monomer.

It is found in the cytoplasm. It carries out the reaction an N-acyl-L-alpha-aminoacyl-tRNA + H2O = an N-acyl-L-amino acid + a tRNA + H(+). Functionally, hydrolyzes ribosome-free peptidyl-tRNAs (with 1 or more amino acids incorporated), which drop off the ribosome during protein synthesis, or as a result of ribosome stalling. Its function is as follows. Catalyzes the release of premature peptidyl moieties from peptidyl-tRNA molecules trapped in stalled 50S ribosomal subunits, and thus maintains levels of free tRNAs and 50S ribosomes. The protein is Peptidyl-tRNA hydrolase of Roseobacter denitrificans (strain ATCC 33942 / OCh 114) (Erythrobacter sp. (strain OCh 114)).